The primary structure comprises 293 residues: AKT-interacting protein (293 aa).

Over residues Met1–Ser11 the composition is skewed to polar residues. The interval Met1–Thr63 is disordered. Basic and acidic residues predominate over residues Lys14–Leu23. At Ser30 the chain carries Phosphoserine. The UBC core domain occupies Tyr74 to Ala222. The span at Met253 to Asn265 shows a compositional bias: basic and acidic residues. The interval Met253–Thr293 is disordered.

Belongs to the ubiquitin-conjugating enzyme family. FTS subfamily. In terms of assembly, component of the FTS/Hook/FHIP complex (FHF complex), composed of AKTIP/FTS, FHIP1B, and one or more members of the Hook family of proteins HOOK1, HOOK2, and HOOK3. Interacts directly with HOOK1, HOOK2 and HOOK3. The FHF complex associates with the homotypic vesicular sorting complex (the HOPS complex). Also interacts with AKT1. May interact with FHIP1A.

The protein localises to the cytoplasm. It is found in the cell membrane. In terms of biological role, component of the FTS/Hook/FHIP complex (FHF complex). The FHF complex may function to promote vesicle trafficking and/or fusion via the homotypic vesicular protein sorting complex (the HOPS complex). Regulates apoptosis by enhancing phosphorylation and activation of AKT1. Increases release of TNFSF6 via the AKT1/GSK3B/NFATC1 signaling cascade. FHF complex promotes the distribution of AP-4 complex to the perinuclear area of the cell. The chain is AKT-interacting protein (AKTIP) from Pongo abelii (Sumatran orangutan).